The following is a 359-amino-acid chain: Membrane-bound lytic murein transglycosylase C (359 aa).

The signal sequence occupies residues 1–16 (MKKVLALALIAPLLIS). The N-palmitoyl cysteine moiety is linked to residue C17. C17 carries the S-diacylglycerol cysteine lipid modification.

This sequence belongs to the transglycosylase Slt family.

It localises to the cell outer membrane. It carries out the reaction Exolytic cleavage of the (1-&gt;4)-beta-glycosidic linkage between N-acetylmuramic acid (MurNAc) and N-acetylglucosamine (GlcNAc) residues in peptidoglycan, from either the reducing or the non-reducing ends of the peptidoglycan chains, with concomitant formation of a 1,6-anhydrobond in the MurNAc residue.. Murein-degrading enzyme. May play a role in recycling of muropeptides during cell elongation and/or cell division. The polypeptide is Membrane-bound lytic murein transglycosylase C (Edwardsiella ictaluri (strain 93-146)).